We begin with the raw amino-acid sequence, 192 residues long: Glycerol-3-phosphate acyltransferase (192 aa).

5 consecutive transmembrane segments (helical) span residues methionine 4 to leucine 24, leucine 54 to glycine 74, proline 80 to phenylalanine 100, alanine 112 to leucine 132, and leucine 154 to valine 174.

The protein belongs to the PlsY family. Probably interacts with PlsX.

Its subcellular location is the cell inner membrane. It catalyses the reaction an acyl phosphate + sn-glycerol 3-phosphate = a 1-acyl-sn-glycero-3-phosphate + phosphate. It participates in lipid metabolism; phospholipid metabolism. Catalyzes the transfer of an acyl group from acyl-phosphate (acyl-PO(4)) to glycerol-3-phosphate (G3P) to form lysophosphatidic acid (LPA). This enzyme utilizes acyl-phosphate as fatty acyl donor, but not acyl-CoA or acyl-ACP. This is Glycerol-3-phosphate acyltransferase from Pseudomonas syringae pv. tomato (strain ATCC BAA-871 / DC3000).